Consider the following 262-residue polypeptide: MSRYLRPPNTSLFVRNVADDTRSEDLRREFGRYGPIVDVYVPLDFYTRRPRGFAYVQFEDVRDAEDALHNLDRKWICGRQIEIQFAQGDRKTPNQMKAKEGRNVYSSSRYDDYDRYRRSRSRSYERRRSRSRSFDYNYRRSYSPRNSRPTGRPRRSRSHSDNDRFKHRNRSFSRSKSNSRSRSKSQPKKEMKAKSRSRSASHTKTRGTSKTDSKTHYKSGSRYEKESRKKEPPRSKSQSRSQSRSRSKSRSRSWTSPKSSGH.

Residues 10-88 (TSLFVRNVAD…RQIEIQFAQG (79 aa)) enclose the RRM domain. Ser23, Ser106, and Ser108 each carry phosphoserine. Positions 116 to 126 (YRRSRSRSYER) are enriched in basic and acidic residues. Residues 116–262 (YRRSRSRSYE…SWTSPKSSGH (147 aa)) form a disordered region. Ser129, Ser131, and Ser133 each carry phosphoserine. Residues 134–150 (FDYNYRRSYSPRNSRPT) show a composition bias toward low complexity. Phosphoserine occurs at positions 158, 160, and 168. 2 stretches are compositionally biased toward basic residues: residues 165 to 186 (FKHRNRSFSRSKSNSRSRSKSQ) and 194 to 207 (KSRSRSASHTKTRG). Basic and acidic residues predominate over residues 209–234 (SKTDSKTHYKSGSRYEKESRKKEPPR). Positions 252 to 262 (RSWTSPKSSGH) are enriched in low complexity.

The protein belongs to the splicing factor SR family. In terms of assembly, the phosphorylated but not the dephosphorylated form interacts with TRA2B/SFRS10. The dephosphorylated form interacts with SNRNP70. Isoform 1 interacts with FUS C-terminus. Isoform 3 interacts with FUS C-terminus. Interacts with YTHDC1, leading to inhibit RNA-binding activity of SRSF10. Phosphorylated. Fully dephosphorylated in mitosis and partially dephosphorylated on heat shock. Widely expressed.

Its subcellular location is the nucleus speckle. The protein localises to the cytoplasm. Functionally, splicing factor that in its dephosphorylated form acts as a general repressor of pre-mRNA splicing. Seems to interfere with the U1 snRNP 5'-splice recognition of SNRNP70. Required for splicing repression in M-phase cells and after heat shock. Also acts as a splicing factor that specifically promotes exon skipping during alternative splicing. Interaction with YTHDC1, a RNA-binding protein that recognizes and binds N6-methyladenosine (m6A)-containing RNAs, prevents SRSF10 from binding to its mRNA-binding sites close to m6A-containing regions, leading to inhibit exon skipping during alternative splicing. May be involved in regulation of alternative splicing in neurons, with isoform 1 acting as a positive and isoform 3 as a negative regulator. This is Serine/arginine-rich splicing factor 10 (SRSF10) from Homo sapiens (Human).